Reading from the N-terminus, the 540-residue chain is Chaperonin GroEL 2 (540 aa).

Residues 29–32 (TMGP), lysine 50, 86–90 (DGTTT), glycine 414, and aspartate 496 each bind ATP.

This sequence belongs to the chaperonin (HSP60) family. As to quaternary structure, forms a cylinder of 14 subunits composed of two heptameric rings stacked back-to-back. Interacts with the co-chaperonin GroES.

It is found in the cytoplasm. The enzyme catalyses ATP + H2O + a folded polypeptide = ADP + phosphate + an unfolded polypeptide.. Its function is as follows. Together with its co-chaperonin GroES, plays an essential role in assisting protein folding. The GroEL-GroES system forms a nano-cage that allows encapsulation of the non-native substrate proteins and provides a physical environment optimized to promote and accelerate protein folding. The sequence is that of Chaperonin GroEL 2 from Rhodopirellula baltica (strain DSM 10527 / NCIMB 13988 / SH1).